A 127-amino-acid polypeptide reads, in one-letter code: Protein ApaG (127 aa).

Positions 3 to 127 (DTNKYRIEVQ…FVLASPRALH (125 aa)) constitute an ApaG domain.

This Dechloromonas aromatica (strain RCB) protein is Protein ApaG.